The chain runs to 315 residues: Aspartate carbamoyltransferase catalytic subunit (315 aa).

Residues Arg-64 and Thr-65 each coordinate carbamoyl phosphate. Lys-92 provides a ligand contact to L-aspartate. Carbamoyl phosphate contacts are provided by Arg-114, His-142, and Gln-145. Arg-176 and Arg-230 together coordinate L-aspartate. Carbamoyl phosphate contacts are provided by Gly-271 and Pro-272.

The protein belongs to the aspartate/ornithine carbamoyltransferase superfamily. ATCase family. In terms of assembly, heterododecamer (2C3:3R2) of six catalytic PyrB chains organized as two trimers (C3), and six regulatory PyrI chains organized as three dimers (R2).

The enzyme catalyses carbamoyl phosphate + L-aspartate = N-carbamoyl-L-aspartate + phosphate + H(+). It participates in pyrimidine metabolism; UMP biosynthesis via de novo pathway; (S)-dihydroorotate from bicarbonate: step 2/3. Functionally, catalyzes the condensation of carbamoyl phosphate and aspartate to form carbamoyl aspartate and inorganic phosphate, the committed step in the de novo pyrimidine nucleotide biosynthesis pathway. The polypeptide is Aspartate carbamoyltransferase catalytic subunit (Lawsonia intracellularis (strain PHE/MN1-00)).